The following is a 218-amino-acid chain: uncharacterized protein (218 aa).

A helical transmembrane segment spans residues 11 to 31; that stretch reads AAGLFPLALMLSGCISYALVS.

The protein resides in the membrane. This is an uncharacterized protein from Escherichia coli (strain K12).